The following is a 201-amino-acid chain: Holliday junction branch migration complex subunit RuvA (201 aa).

Residues 1 to 63 (MYDYIKGTVT…EDNISLFGFQ (63 aa)) are domain I. The tract at residues 64 to 142 (TTEERYLFKK…DVVASEIVYV (79 aa)) is domain II. The segment at 143 to 153 (APENDMVAGLS) is flexible linker. The tract at residues 153 to 201 (SPQLEEAVLALEALGYSTRELKKVIPKLAKEEDLTSDAYIKLALQLMTK) is domain III.

The protein belongs to the RuvA family. Homotetramer. Forms an RuvA(8)-RuvB(12)-Holliday junction (HJ) complex. HJ DNA is sandwiched between 2 RuvA tetramers; dsDNA enters through RuvA and exits via RuvB. An RuvB hexamer assembles on each DNA strand where it exits the tetramer. Each RuvB hexamer is contacted by two RuvA subunits (via domain III) on 2 adjacent RuvB subunits; this complex drives branch migration. In the full resolvosome a probable DNA-RuvA(4)-RuvB(12)-RuvC(2) complex forms which resolves the HJ.

Its subcellular location is the cytoplasm. The RuvA-RuvB-RuvC complex processes Holliday junction (HJ) DNA during genetic recombination and DNA repair, while the RuvA-RuvB complex plays an important role in the rescue of blocked DNA replication forks via replication fork reversal (RFR). RuvA specifically binds to HJ cruciform DNA, conferring on it an open structure. The RuvB hexamer acts as an ATP-dependent pump, pulling dsDNA into and through the RuvAB complex. HJ branch migration allows RuvC to scan DNA until it finds its consensus sequence, where it cleaves and resolves the cruciform DNA. The protein is Holliday junction branch migration complex subunit RuvA of Listeria monocytogenes serotype 4a (strain HCC23).